The chain runs to 270 residues: Ribonuclease HII (270 aa).

An RNase H type-2 domain is found at 28–222 (RQVAGADEAG…VSGRQGAPPR (195 aa)). A divalent metal cation contacts are provided by Asp-34, Glu-35, and Asp-128.

The protein belongs to the RNase HII family. Mn(2+) serves as cofactor. Requires Mg(2+) as cofactor.

The protein localises to the cytoplasm. The enzyme catalyses Endonucleolytic cleavage to 5'-phosphomonoester.. Functionally, endonuclease that specifically degrades the RNA of RNA-DNA hybrids. The chain is Ribonuclease HII from Salinispora tropica (strain ATCC BAA-916 / DSM 44818 / JCM 13857 / NBRC 105044 / CNB-440).